Here is a 166-residue protein sequence, read N- to C-terminus: Small ribosomal subunit protein uS5 (166 aa).

Residues 11–74 (LREKLVAINR…EKARANMKRV (64 aa)) form the S5 DRBM domain.

It belongs to the universal ribosomal protein uS5 family. In terms of assembly, part of the 30S ribosomal subunit. Contacts proteins S4 and S8.

In terms of biological role, with S4 and S12 plays an important role in translational accuracy. Its function is as follows. Located at the back of the 30S subunit body where it stabilizes the conformation of the head with respect to the body. This Alkalilimnicola ehrlichii (strain ATCC BAA-1101 / DSM 17681 / MLHE-1) protein is Small ribosomal subunit protein uS5.